Reading from the N-terminus, the 165-residue chain is Peptide methionine sulfoxide reductase MsrA (165 aa).

The active site involves Cys10.

Belongs to the MsrA Met sulfoxide reductase family.

The enzyme catalyses L-methionyl-[protein] + [thioredoxin]-disulfide + H2O = L-methionyl-(S)-S-oxide-[protein] + [thioredoxin]-dithiol. It carries out the reaction [thioredoxin]-disulfide + L-methionine + H2O = L-methionine (S)-S-oxide + [thioredoxin]-dithiol. In terms of biological role, has an important function as a repair enzyme for proteins that have been inactivated by oxidation. Catalyzes the reversible oxidation-reduction of methionine sulfoxide in proteins to methionine. The chain is Peptide methionine sulfoxide reductase MsrA from Campylobacter jejuni subsp. jejuni serotype O:23/36 (strain 81-176).